A 161-amino-acid polypeptide reads, in one-letter code: Large ribosomal subunit protein uL15 (161 aa).

The segment covering 1 to 13 (MKLNELRDNEGAA) has biased composition (basic and acidic residues). The disordered stretch occupies residues 1–51 (MKLNELRDNEGAARKKKRVARGPGSGKGKTAGRGIKGQKSRSGVALNGYEG). Residues 23–35 (PGSGKGKTAGRGI) show a composition bias toward gly residues.

The protein belongs to the universal ribosomal protein uL15 family. In terms of assembly, part of the 50S ribosomal subunit.

Functionally, binds to the 23S rRNA. This is Large ribosomal subunit protein uL15 from Cereibacter sphaeroides (strain ATCC 17023 / DSM 158 / JCM 6121 / CCUG 31486 / LMG 2827 / NBRC 12203 / NCIMB 8253 / ATH 2.4.1.) (Rhodobacter sphaeroides).